A 255-amino-acid polypeptide reads, in one-letter code: 5-oxoprolinase subunit A 1 (255 aa).

The protein belongs to the LamB/PxpA family. In terms of assembly, forms a complex composed of PxpA, PxpB and PxpC.

It carries out the reaction 5-oxo-L-proline + ATP + 2 H2O = L-glutamate + ADP + phosphate + H(+). In terms of biological role, catalyzes the cleavage of 5-oxoproline to form L-glutamate coupled to the hydrolysis of ATP to ADP and inorganic phosphate. This chain is 5-oxoprolinase subunit A 1, found in Agrobacterium fabrum (strain C58 / ATCC 33970) (Agrobacterium tumefaciens (strain C58)).